Reading from the N-terminus, the 244-residue chain is UPF0280 protein Mhun_0136 (244 aa).

This sequence belongs to the UPF0280 family.

The sequence is that of UPF0280 protein Mhun_0136 from Methanospirillum hungatei JF-1 (strain ATCC 27890 / DSM 864 / NBRC 100397 / JF-1).